The following is a 639-amino-acid chain: Polyvinylalcohol dehydrogenase (639 aa).

Residues 1 to 33 (MQQNIERNQVSMTTSRFVWGAVMALVALGSASA) form the signal peptide. One can recognise a Cytochrome c domain in the interval 36–152 (LNLPDGAALY…TPDQWNGWGA (117 aa)). Cys49, Cys52, and His53 together coordinate heme.

The protein belongs to the bacterial PQQ dehydrogenase family. In terms of assembly, monomer. Pyrroloquinoline quinone is required as a cofactor.

It localises to the cytoplasm. The catalysed reaction is a polyvinyl alcohol + 2n Fe(III)-[cytochrome c] = an oxidized polyvinyl alcohol + 2n Fe(II)-[cytochrome c] + 2n H(+). Its function is as follows. Catalyzes the oxidation of polyvinyl alcohol (PVA) in the polyvinyl alcohol degradation pathway. The chain is Polyvinylalcohol dehydrogenase (pvaA) from Pseudomonas sp.